The following is a 1037-amino-acid chain: Guanine nucleotide-binding protein G(s) subunit alpha isoforms XLas (1037 aa).

Disordered stretches follow at residues 1-105, 185-224, 283-588, and 640-666; these read MGVR…MPFE, APGG…EETM, SPSQ…TSGC, and PLAE…KKRS. Low complexity predominate over residues 33–46; the sequence is APGAAAPGAGPSPA. Basic and acidic residues predominate over residues 343 to 354; that stretch reads PDKRERAERPPV. Low complexity-rich tracts occupy residues 361–408 and 416–521; these read MEGA…GATP and APAD…PASG. Positions 553–565 are enriched in basic and acidic residues; sequence GKSESSRGRRVYY. Residues 572-583 show a composition bias toward acidic residues; the sequence is SDDDSSGDESDD. Positions 640 to 660 are enriched in basic and acidic residues; that stretch reads PLAEKRRQMRKEALEKRAQKR. Residues 641-667 are a coiled coil; that stretch reads LAEKRRQMRKEALEKRAQKRAEKKRSK. The region spanning 682–1037 is the G-alpha domain; that stretch reads CTHRLLLLGA…RMHLRQYELL (356 aa). The G1 motif stretch occupies residues 685–698; it reads RLLLLGAGESGKST. 690 to 698 is a GTP binding site; that stretch reads GAGESGKST. Serine 697 provides a ligand contact to Mg(2+). Residues 711–734 are disordered; it reads FNGEGGEEDPQAARSNSDGEKATK. Positions 730-756 form a coiled coil; it reads EKATKVQDIKNNLKEAIETIVAAMSNL. The segment at 839-847 is G2 motif; it reads DLLRCRVLT. GTP-binding positions include 840–847, 866–870, and 935–938; these read LLRCRVLT, DVGGQ, and NKQD. Residue arginine 844 is modified to ADP-ribosylarginine; by cholera toxin. Position 847 (threonine 847) interacts with Mg(2+). The segment at 862 to 871 is G3 motif; that stretch reads FHMFDVGGQR. A G4 motif region spans residues 931-938; the sequence is ILFLNKQD. The residue at position 995 (serine 995) is a Phosphoserine. Positions 1007-1012 are G5 motif; it reads TCAVDT. Alanine 1009 contributes to the GTP binding site.

This sequence belongs to the G-alpha family. G(s) subfamily. As to quaternary structure, g proteins are composed of 3 units; alpha, beta and gamma. The alpha chain contains the guanine nucleotide binding site. Interacts through its N-terminal region with ALEX which is produced from the same locus in a different open reading frame. This interaction may inhibit its adenylyl cyclase-stimulating activity. Interacts with MAGED2.

The protein resides in the cell membrane. It localises to the apical cell membrane. It carries out the reaction GTP + H2O = GDP + phosphate + H(+). In terms of biological role, guanine nucleotide-binding proteins (G proteins) function as transducers in numerous signaling pathways controlled by G protein-coupled receptors (GPCRs). The alpha chain contains the guanine nucleotide binding site and alternates between an active, GTP-bound state and an inactive, GDP-bound state. Signaling by an activated GPCR promotes GDP release and GTP binding. The alpha subunit has a low GTPase activity that converts bound GTP to GDP, thereby terminating the signal. Both GDP release and GTP hydrolysis are modulated by numerous regulatory proteins. Signaling involves the activation of adenylyl cyclases, resulting in increased levels of the signaling molecule cAMP. GNAS functions downstream of several GPCRs, including beta-adrenergic receptors. XLas isoforms interact with the same set of receptors as Gnas isoforms. This chain is Guanine nucleotide-binding protein G(s) subunit alpha isoforms XLas (GNAS), found in Homo sapiens (Human).